The chain runs to 267 residues: Putative carboxymethylenebutenolidase (267 aa).

Catalysis depends on residues cysteine 137, aspartate 194, and histidine 226.

The protein belongs to the dienelactone hydrolase family.

It carries out the reaction 2-(5-oxo-2,5-dihydrofuran-2-ylidene)acetate + H2O = 4-oxohex-2-enedioate + H(+). In Yersinia pestis, this protein is Putative carboxymethylenebutenolidase.